A 375-amino-acid polypeptide reads, in one-letter code: Growth/differentiation factor 8 (375 aa).

A signal peptide spans 1 to 18; it reads MQKLQISVYIYLFMLIVA. The propeptide occupies 19–266; it reads GPVDLNENSE…VTDTPKRSRR (248 aa). N-linked (GlcNAc...) asparagine glycans are attached at residues Asn-47 and Asn-71. Disulfide bonds link Cys-272–Cys-282, Cys-281–Cys-340, Cys-309–Cys-372, and Cys-313–Cys-374.

It belongs to the TGF-beta family. In terms of assembly, homodimer; disulfide-linked. Interacts with WFIKKN2, leading to inhibit its activity. Interacts with FSTL3. Post-translationally, synthesized as large precursor molecule that undergoes proteolytic cleavage to generate an N-terminal propeptide and a disulfide linked C-terminal dimer, which is the biologically active molecule. The circulating form consists of a latent complex of the C-terminal dimer and other proteins, including its propeptide, which maintain the C-terminal dimer in a latent, inactive state. Ligand activation requires additional cleavage of the prodomain by a tolloid-like metalloproteinase.

Its subcellular location is the secreted. Acts specifically as a negative regulator of skeletal muscle growth. The protein is Growth/differentiation factor 8 (MSTN) of Bubalus bubalis (Domestic water buffalo).